An 860-amino-acid chain; its full sequence is Leucine--tRNA ligase (860 aa).

A 'HIGH' region motif is present at residues P42–H52. Residues K619–S623 carry the 'KMSKS' region motif. Residue K622 participates in ATP binding.

The protein belongs to the class-I aminoacyl-tRNA synthetase family.

The protein localises to the cytoplasm. The enzyme catalyses tRNA(Leu) + L-leucine + ATP = L-leucyl-tRNA(Leu) + AMP + diphosphate. This Shigella dysenteriae serotype 1 (strain Sd197) protein is Leucine--tRNA ligase.